The primary structure comprises 126 residues: Large ribosomal subunit protein bL12 (126 aa).

This sequence belongs to the bacterial ribosomal protein bL12 family. Homodimer. Part of the ribosomal stalk of the 50S ribosomal subunit. Forms a multimeric L10(L12)X complex, where L10 forms an elongated spine to which 2 to 4 L12 dimers bind in a sequential fashion. Binds GTP-bound translation factors.

Forms part of the ribosomal stalk which helps the ribosome interact with GTP-bound translation factors. Is thus essential for accurate translation. The protein is Large ribosomal subunit protein bL12 of Solibacter usitatus (strain Ellin6076).